We begin with the raw amino-acid sequence, 462 residues long: Protein ultraspiracle homolog (462 aa).

The segment at 1–113 is modulating; it reads MSSVAKKDKR…NHPLSGSKHL (113 aa). NR C4-type zinc fingers lie at residues 114-134 and 150-174; these read CSIC…CEGC and CRED…YQKC. A DNA-binding region (nuclear receptor) is located at residues 114–179; it reads CSICGDRASG…RYQKCLACGM (66 aa). The interval 180–201 is hinge; sequence KREAVQEERQRAARRTEDAHPS. The NR LBD domain occupies 204 to 453; it reads VQELSIERLL…SYIRDALCNH (250 aa).

Belongs to the nuclear hormone receptor family. NR2 subfamily. Heterodimer of USP and ECR. In terms of tissue distribution, abundant expression seen in males and ovaries.

Its subcellular location is the nucleus. This chain is Protein ultraspiracle homolog (USP), found in Bombyx mori (Silk moth).